Reading from the N-terminus, the 542-residue chain is Putative cysteine ligase BshC (542 aa).

Residues 458–487 (VAKNAAILQAQIEFLQHALERALLRKHETE) adopt a coiled-coil conformation.

The protein belongs to the BshC family.

Involved in bacillithiol (BSH) biosynthesis. May catalyze the last step of the pathway, the addition of cysteine to glucosamine malate (GlcN-Mal) to generate BSH. This Geobacillus kaustophilus (strain HTA426) protein is Putative cysteine ligase BshC.